Here is a 299-residue protein sequence, read N- to C-terminus: Tyrosine recombinase XerC (299 aa).

The region spanning M1–N85 is the Core-binding (CB) domain. The Tyr recombinase domain occupies R106 to D285. Residues R146, K170, H237, R240, and H263 contribute to the active site. The O-(3'-phospho-DNA)-tyrosine intermediate role is filled by Y272.

Belongs to the 'phage' integrase family. XerC subfamily. Forms a cyclic heterotetrameric complex composed of two molecules of XerC and two molecules of XerD.

It is found in the cytoplasm. In terms of biological role, site-specific tyrosine recombinase, which acts by catalyzing the cutting and rejoining of the recombining DNA molecules. The XerC-XerD complex is essential to convert dimers of the bacterial chromosome into monomers to permit their segregation at cell division. It also contributes to the segregational stability of plasmids. The chain is Tyrosine recombinase XerC from Pseudomonas savastanoi pv. phaseolicola (strain 1448A / Race 6) (Pseudomonas syringae pv. phaseolicola (strain 1448A / Race 6)).